A 520-amino-acid polypeptide reads, in one-letter code: GMP synthase [glutamine-hydrolyzing] (520 aa).

A Glutamine amidotransferase type-1 domain is found at 9-202; sequence TILIIDFGSQ…VHRIVGVKPG (194 aa). Cys-86 serves as the catalytic Nucleophile. Residues His-176 and Glu-178 contribute to the active site. The region spanning 203 to 395 is the GMPS ATP-PPase domain; sequence WTMGAYREQA…LGLPDSFIGR (193 aa). Residue 230 to 236 participates in ATP binding; it reads SGGVDSS.

As to quaternary structure, homodimer.

The enzyme catalyses XMP + L-glutamine + ATP + H2O = GMP + L-glutamate + AMP + diphosphate + 2 H(+). Its pathway is purine metabolism; GMP biosynthesis; GMP from XMP (L-Gln route): step 1/1. Functionally, catalyzes the synthesis of GMP from XMP. The polypeptide is GMP synthase [glutamine-hydrolyzing] (Brucella melitensis biotype 2 (strain ATCC 23457)).